A 447-amino-acid chain; its full sequence is Putative branched-chain amino acid carrier protein SH1502 (447 aa).

13 consecutive transmembrane segments (helical) span residues 6-26, 40-60, 74-94, 116-136, 143-163, 193-213, 229-249, 270-287, 290-310, 328-348, 350-370, 382-402, and 417-437; these read WIVG…IFPP, VIAF…VGAL, PKFS…LFAI, LVLF…CINP, IGSL…IKGF, GYLT…VNAI, VMSG…LGFI, VGAY…GVFG, LLGI…IVSV, IFFT…VISM, VPVL…ILLA, IPIA…NGWV, and LEWF…AKFV.

The protein belongs to the branched chain amino acid transporter family.

The protein localises to the cell membrane. In terms of biological role, component of the transport system for branched-chain amino acids (leucine, isoleucine and valine), which is coupled to a proton motive force. The protein is Putative branched-chain amino acid carrier protein SH1502 of Staphylococcus haemolyticus (strain JCSC1435).